Reading from the N-terminus, the 152-residue chain is Sulfur-rich protein (152 aa).

The disordered stretch occupies residues 1-20; sequence MSTVPVVQGAGSSNSAQDIS. 2 helical membrane passes run 43-63 and 69-89; these read VGLVVIGLLLVIATLIFLVSA and AIYLVAIPAILGCVNICVGIL.

It localises to the membrane. This is Sulfur-rich protein (srp) from Chlamydia trachomatis serovar A (strain ATCC VR-571B / DSM 19440 / HAR-13).